Reading from the N-terminus, the 93-residue chain is Large ribosomal subunit protein eL42 (93 aa).

Positions 11 and 14 each coordinate Zn(2+). Residues 11–75 (CPNCDEHHQL…TDLKYRCSEC (65 aa)) form a C4-type zinc finger. The disordered stretch occupies residues 24 to 62 (KVRSGRSSGMKWDARRTKRANASIGNHGRFSKVPVGNKP). The Zn(2+) site is built by Cys72 and Cys75.

This sequence belongs to the eukaryotic ribosomal protein eL42 family. In terms of assembly, part of the 50S ribosomal subunit. It depends on Zn(2+) as a cofactor.

Functionally, binds to the 23S rRNA. In Halobacterium salinarum (strain ATCC 700922 / JCM 11081 / NRC-1) (Halobacterium halobium), this protein is Large ribosomal subunit protein eL42.